Consider the following 221-residue polypeptide: Oxaloacetate tautomerase FAHD1, mitochondrial (221 aa).

A mitochondrion-targeting transit peptide spans 1–24 (MASTKPLSRFWEWGKNIVCVGRNY). R22 contributes to the oxalate binding site. S37 is subject to Phosphoserine. Mg(2+) contacts are provided by E68, E70, and D99. At K110 the chain carries N6-acetyllysine. K112 is subject to N6-succinyllysine. K120 lines the oxalate pocket.

The protein belongs to the FAH family. Homodimer. Mg(2+) is required as a cofactor. Mn(2+) serves as cofactor. Ubiquitous with higher expression in the liver and the kidney (at protein level).

The protein localises to the mitochondrion. It is found in the cytoplasm. The protein resides in the cytosol. The catalysed reaction is oxaloacetate = enol-oxaloacetate. The enzyme catalyses oxaloacetate + H(+) = pyruvate + CO2. It carries out the reaction a 3-acylpyruvate + H2O = a carboxylate + pyruvate + H(+). It catalyses the reaction acetylpyruvate + H2O = acetate + pyruvate + H(+). The catalysed reaction is 3-fumarylpyruvate + H2O = fumarate + pyruvate + H(+). Oxaloacetate decarboxylation is potently and competitively inhibited by oxalate. In terms of biological role, tautomerase that converts enol-oxaloacetate, a strong inhibitor of succinate dehydrogenase, to the physiological keto form of oxaloacetate. It is thereby required to maximize aerobic respiration efficiency by preventing succinate dehydrogenase inhibition. Also acts as a weak oxaloacetate decarboxylase (ODx), catalyzing the decarboxylation of oxaloacetate (OAA) to pyruvate and CO(2), and as such is likely a regulatory enzyme in the TCA cycle. Also displays acylpyruvase activity, being able to hydrolyze acetylpyruvate and fumarylpyruvate in vitro. The protein is Oxaloacetate tautomerase FAHD1, mitochondrial of Mus musculus (Mouse).